The sequence spans 239 residues: Ribosomal RNA small subunit methyltransferase G (239 aa).

Residues G95, L100, 118–120 (EAT), 146–147 (AE), and R164 each bind S-adenosyl-L-methionine.

Belongs to the methyltransferase superfamily. RNA methyltransferase RsmG family.

The protein resides in the cytoplasm. The enzyme catalyses guanosine(527) in 16S rRNA + S-adenosyl-L-methionine = N(7)-methylguanosine(527) in 16S rRNA + S-adenosyl-L-homocysteine. Its function is as follows. Specifically methylates the N7 position of guanine in position 527 of 16S rRNA. The protein is Ribosomal RNA small subunit methyltransferase G of Sorangium cellulosum (strain So ce56) (Polyangium cellulosum (strain So ce56)).